We begin with the raw amino-acid sequence, 745 residues long: Multiple C2 domain and transmembrane region protein 13 (745 aa).

The tract at residues 1-30 (MAANKDEFSVKQISPKLGGERGARNPYGPT) is disordered. C2 domains follow at residues 21–139 (RGAR…PQRY), 171–293 (DASE…SAPA), and 326–453 (AEES…ACSY). Ca(2+)-binding residues include aspartate 56, aspartate 61, aspartate 106, and asparagine 110. The next 2 helical transmembrane spans lie at 568-588 (SLIV…LVGL) and 688-708 (FYCW…PMWL).

Belongs to the MCTP family. Requires Ca(2+) as cofactor. Expressed in incipient leaf primordia.

Its subcellular location is the cell membrane. The protein resides in the cytoplasm. Its function is as follows. May function as a signaling molecule by regulating the trafficking of other regulators. In Arabidopsis thaliana (Mouse-ear cress), this protein is Multiple C2 domain and transmembrane region protein 13.